The primary structure comprises 703 residues: Calcium-responsive transcription factor (703 aa).

3 disordered regions span residues 1–61, 130–150, and 517–539; these read MEQS…QNIP, GPLV…SDRN, and GNSQ…SLSP. A compositionally biased stretch (basic and acidic residues) spans 9–22; that stretch reads KVNHNDSEESKTDS. The span at 23–34 shows a compositional bias: polar residues; that stretch reads QHLTYMDSSEPS.

Its subcellular location is the nucleus. Its function is as follows. Acts as a transcriptional activator that mediates the calcium- and neuron-selective induction of BDNF exon III transcription. Binds to the consensus calcium-response element CaRE1 5'-CTATTTCGAG-3' sequence. This Bos taurus (Bovine) protein is Calcium-responsive transcription factor (CARF).